Reading from the N-terminus, the 129-residue chain is Large ribosomal subunit protein bL12 (129 aa).

Belongs to the bacterial ribosomal protein bL12 family. In terms of assembly, homodimer. Part of the ribosomal stalk of the 50S ribosomal subunit. Forms a multimeric L10(L12)X complex, where L10 forms an elongated spine to which 2 to 4 L12 dimers bind in a sequential fashion. Binds GTP-bound translation factors.

Its function is as follows. Forms part of the ribosomal stalk which helps the ribosome interact with GTP-bound translation factors. Is thus essential for accurate translation. This is Large ribosomal subunit protein bL12 from Micrococcus luteus (strain ATCC 4698 / DSM 20030 / JCM 1464 / CCM 169 / CCUG 5858 / IAM 1056 / NBRC 3333 / NCIMB 9278 / NCTC 2665 / VKM Ac-2230) (Micrococcus lysodeikticus).